A 344-amino-acid polypeptide reads, in one-letter code: Methionine import ATP-binding protein MetN (344 aa).

Residues 2 to 241 (IELQGLSQRF…PQHEVTRAMI (240 aa)) form the ABC transporter domain. 38–45 (GRSGAGKS) is a binding site for ATP.

This sequence belongs to the ABC transporter superfamily. Methionine importer (TC 3.A.1.24) family. The complex is composed of two ATP-binding proteins (MetN), two transmembrane proteins (MetI) and a solute-binding protein (MetQ).

Its subcellular location is the cell inner membrane. It catalyses the reaction L-methionine(out) + ATP + H2O = L-methionine(in) + ADP + phosphate + H(+). The catalysed reaction is D-methionine(out) + ATP + H2O = D-methionine(in) + ADP + phosphate + H(+). In terms of biological role, part of the ABC transporter complex MetNIQ involved in methionine import. Responsible for energy coupling to the transport system. The chain is Methionine import ATP-binding protein MetN from Cupriavidus metallidurans (strain ATCC 43123 / DSM 2839 / NBRC 102507 / CH34) (Ralstonia metallidurans).